We begin with the raw amino-acid sequence, 378 residues long: MGAPMNPEFQLEGRAPGSLAGARIVVAMSGGVDSSVVAALAAASGAETIGVTLQLYDHGAAVGRTGSCCAGQDIRDARAVADRLGIAHYVFDYESRFRDSVIADFADEYAAGRTPIPCVRCNQGVKFTDLFGIARDLGADCLATGHYVRRVVGAGGRAELHRAADPARDQSYFLFATTRDQLDYLRFPLGAMPKPRVREIAAELGLGVAAKPDSQDICFVPDGDYASIVKRLRPEAAEEGEIVGLDGRVLGRHRGLIHFTVGQRRGIEIGGSPEPLYVVRLEPETKRLVVGPRRALAVSAAMLDDVNWIGEGYEGPLTAKVRSLAKPVPARFEDGAVRFDQPEYGVAPGQAAVLYAGDRVLGGGWIRATVPAELAVAA.

Residues Ala-27 to Ser-34 and Leu-53 each bind ATP. Cys-121 acts as the Nucleophile in catalysis. Cys-121 and Cys-218 are joined by a disulfide. Residue Gly-145 participates in ATP binding. The interaction with tRNA stretch occupies residues Arg-168–Gln-170. Cys-218 serves as the catalytic Cysteine persulfide intermediate.

This sequence belongs to the MnmA/TRMU family.

The protein localises to the cytoplasm. It carries out the reaction S-sulfanyl-L-cysteinyl-[protein] + uridine(34) in tRNA + AH2 + ATP = 2-thiouridine(34) in tRNA + L-cysteinyl-[protein] + A + AMP + diphosphate + H(+). Catalyzes the 2-thiolation of uridine at the wobble position (U34) of tRNA, leading to the formation of s(2)U34. In Rhizorhabdus wittichii (strain DSM 6014 / CCUG 31198 / JCM 15750 / NBRC 105917 / EY 4224 / RW1) (Sphingomonas wittichii), this protein is tRNA-specific 2-thiouridylase MnmA.